A 445-amino-acid polypeptide reads, in one-letter code: Phosphoglucosamine mutase (445 aa).

S102 acts as the Phosphoserine intermediate in catalysis. Positions 102, 240, 242, and 244 each coordinate Mg(2+). S102 bears the Phosphoserine mark.

Belongs to the phosphohexose mutase family. Requires Mg(2+) as cofactor. Post-translationally, activated by phosphorylation.

It catalyses the reaction alpha-D-glucosamine 1-phosphate = D-glucosamine 6-phosphate. In terms of biological role, catalyzes the conversion of glucosamine-6-phosphate to glucosamine-1-phosphate. In Mycolicibacterium vanbaalenii (strain DSM 7251 / JCM 13017 / BCRC 16820 / KCTC 9966 / NRRL B-24157 / PYR-1) (Mycobacterium vanbaalenii), this protein is Phosphoglucosamine mutase.